Here is a 286-residue protein sequence, read N- to C-terminus: MIVLRNEICDKLENIAKILKFVRHCIGCEGINLEIENPQHHPSIELTQKCNLNCIYCYSRLKTVKRGIYGNLEEAETVTISQYGEPLLDLEGVKKAIEFCKDLGLRVDLQTNGTLLNEEIIKELKDLGLDLIMISLSSFSREKYKLLTGKDYFNRVLNNIKIASKYLHTIVRSIYIPGFNDNELLNLAKELNNYADEIMVHQLISYKENENLLKNAGIDLNNLGRIRDLLLIVDEMQKNAPKINVTIKGCLLVQLKEMDGFILNNITYDVFSEVPDIKREHRPLPW.

The 221-residue stretch at 36 to 256 folds into the Radical SAM core domain; that stretch reads ENPQHHPSIE…IKGCLLVQLK (221 aa). 3 residues coordinate [4Fe-4S] cluster: cysteine 50, cysteine 54, and cysteine 57.

Requires [4Fe-4S] cluster as cofactor.

This is an uncharacterized protein from Methanocaldococcus jannaschii (strain ATCC 43067 / DSM 2661 / JAL-1 / JCM 10045 / NBRC 100440) (Methanococcus jannaschii).